A 77-amino-acid chain; its full sequence is Acyl carrier protein (77 aa).

The Carrier domain occupies 1–76; it reads MENFDKVKDI…DAVKYINSLE (76 aa). An O-(pantetheine 4'-phosphoryl)serine modification is found at S36.

It belongs to the acyl carrier protein (ACP) family. 4'-phosphopantetheine is transferred from CoA to a specific serine of apo-ACP by AcpS. This modification is essential for activity because fatty acids are bound in thioester linkage to the sulfhydryl of the prosthetic group.

The protein resides in the cytoplasm. It participates in lipid metabolism; fatty acid biosynthesis. Functionally, carrier of the growing fatty acid chain in fatty acid biosynthesis. This is Acyl carrier protein from Staphylococcus epidermidis (strain ATCC 12228 / FDA PCI 1200).